Here is a 721-residue protein sequence, read N- to C-terminus: Protein mu-NS (721 aa).

An interaction with sigma-NS region spans residues 1–13 (MASFKGFSVNTVP). An RNA-binding region spans residues 1 to 38 (MASFKGFSVNTVPVSKAKRDISSLAATPGIRSQPFTPS). The segment at 14-40 (VSKAKRDISSLAATPGIRSQPFTPSVD) is interaction with mu-2. An involved in the formation of factory-like inclusions region spans residues 471–721 (SSDMVDGIKL…IDFSVPTDEL (251 aa)). 2 coiled-coil regions span residues 523–560 (LLSQ…SAQA) and 628–686 (QMNG…NQRQ).

Belongs to the orthoreovirus mu-NS protein family. Interacts with mu-2. Interacts with sigma-NS; in viral factories. Interacts with the inner capsid proteins lambda-1 and sigma-2, and outer capsid protein lambda-2; in viral factories. The N-terminus is blocked.

Its subcellular location is the host cytoplasm. Its function is as follows. Non-structural protein implicated with protein sigma-NS in forming the matrix of viral factories, which are large inclusions in the host cytoplasm where replication intermediates are assembled and viral RNA replication takes place. Together with mu-2, recruits the other core proteins to these factories. This Mammalia (T1L) protein is Protein mu-NS (M3).